We begin with the raw amino-acid sequence, 193 residues long: Adenine phosphoribosyltransferase (193 aa).

Belongs to the purine/pyrimidine phosphoribosyltransferase family. As to quaternary structure, homodimer.

The protein resides in the cytoplasm. It catalyses the reaction AMP + diphosphate = 5-phospho-alpha-D-ribose 1-diphosphate + adenine. It participates in purine metabolism; AMP biosynthesis via salvage pathway; AMP from adenine: step 1/1. Catalyzes a salvage reaction resulting in the formation of AMP, that is energically less costly than de novo synthesis. The polypeptide is Adenine phosphoribosyltransferase (Chromobacterium violaceum (strain ATCC 12472 / DSM 30191 / JCM 1249 / CCUG 213 / NBRC 12614 / NCIMB 9131 / NCTC 9757 / MK)).